Reading from the N-terminus, the 469-residue chain is Glutamate--tRNA ligase (469 aa).

Residues 9–19 (PSPTGFLHVGG) carry the 'HIGH' region motif. Residues cysteine 98, cysteine 100, cysteine 125, and aspartate 127 each contribute to the Zn(2+) site. A 'KMSKS' region motif is present at residues 236 to 240 (KLSKR). Lysine 239 contacts ATP.

This sequence belongs to the class-I aminoacyl-tRNA synthetase family. Glutamate--tRNA ligase type 1 subfamily. As to quaternary structure, monomer. The cofactor is Zn(2+).

It localises to the cytoplasm. It catalyses the reaction tRNA(Glu) + L-glutamate + ATP = L-glutamyl-tRNA(Glu) + AMP + diphosphate. Catalyzes the attachment of glutamate to tRNA(Glu) in a two-step reaction: glutamate is first activated by ATP to form Glu-AMP and then transferred to the acceptor end of tRNA(Glu). This Shewanella woodyi (strain ATCC 51908 / MS32) protein is Glutamate--tRNA ligase.